We begin with the raw amino-acid sequence, 141 residues long: MRHYEIIFLVHPDQSEQVGGMVERYTKLIEEDGGKIHRLEDWGRRQLAYAINNVHKAHYVMLNVECTGKALAELEDNFRYNDAVIRNLVIRREEAITGQSEMLKAEENRSERRERRDRPEHADSADGDDSDNSDASDNADE.

The segment at 97–141 is disordered; that stretch reads TGQSEMLKAEENRSERRERRDRPEHADSADGDDSDNSDASDNADE. The segment covering 103–124 has biased composition (basic and acidic residues); that stretch reads LKAEENRSERRERRDRPEHADS. Residues 125–141 show a composition bias toward acidic residues; that stretch reads ADGDDSDNSDASDNADE.

Belongs to the bacterial ribosomal protein bS6 family.

Functionally, binds together with bS18 to 16S ribosomal RNA. The chain is Small ribosomal subunit protein bS6 from Pseudomonas fluorescens (strain ATCC BAA-477 / NRRL B-23932 / Pf-5).